Reading from the N-terminus, the 1108-residue chain is Lon protease homolog, mitochondrial (1108 aa).

The N-terminal 62 residues, Met-1–Arg-62, are a transit peptide targeting the mitochondrion. 2 disordered regions span residues Pro-24 to Ser-192 and Leu-299 to Lys-318. Residues Arg-36 to Arg-53 show a composition bias toward low complexity. 2 stretches are compositionally biased toward basic and acidic residues: residues Glu-78 to Gly-103 and Lys-119 to Pro-146. The segment covering Ser-161–Gly-171 has biased composition (polar residues). Basic and acidic residues-rich tracts occupy residues Asp-174 to Leu-188 and Asn-309 to Lys-318. Positions Val-200 to Leu-452 constitute a Lon N-terminal domain. Gly-605–Thr-612 contacts ATP. Basic and acidic residues predominate over residues Asp-821–Thr-855. Residues Asp-821–Ala-862 are disordered. The 187-residue stretch at Thr-895 to Glu-1081 folds into the Lon proteolytic domain. Active-site residues include Ser-987 and Lys-1030.

It belongs to the peptidase S16 family. Homohexamer or homoheptamer. Organized in a ring with a central cavity.

The protein localises to the mitochondrion matrix. The catalysed reaction is Hydrolysis of proteins in presence of ATP.. Its function is as follows. ATP-dependent serine protease that mediates the selective degradation of misfolded, unassembled or oxidatively damaged polypeptides as well as certain short-lived regulatory proteins in the mitochondrial matrix. May also have a chaperone function in the assembly of inner membrane protein complexes. Participates in the regulation of mitochondrial gene expression and in the maintenance of the integrity of the mitochondrial genome. Binds to mitochondrial DNA in a site-specific manner. In Aspergillus fumigatus (strain ATCC MYA-4609 / CBS 101355 / FGSC A1100 / Af293) (Neosartorya fumigata), this protein is Lon protease homolog, mitochondrial (pim1).